We begin with the raw amino-acid sequence, 405 residues long: NADH-quinone oxidoreductase subunit D (405 aa).

The protein belongs to the complex I 49 kDa subunit family. As to quaternary structure, NDH-1 is composed of 14 different subunits. Subunits NuoB, C, D, E, F, and G constitute the peripheral sector of the complex.

Its subcellular location is the cell inner membrane. The catalysed reaction is a quinone + NADH + 5 H(+)(in) = a quinol + NAD(+) + 4 H(+)(out). NDH-1 shuttles electrons from NADH, via FMN and iron-sulfur (Fe-S) centers, to quinones in the respiratory chain. The immediate electron acceptor for the enzyme in this species is believed to be ubiquinone. Couples the redox reaction to proton translocation (for every two electrons transferred, four hydrogen ions are translocated across the cytoplasmic membrane), and thus conserves the redox energy in a proton gradient. This chain is NADH-quinone oxidoreductase subunit D, found in Leptospira interrogans serogroup Icterohaemorrhagiae serovar copenhageni (strain Fiocruz L1-130).